Here is a 566-residue protein sequence, read N- to C-terminus: MSDEKNYGISLAAPARPDLGSRTASQLEKATASHVEFATPKDPGALHDATLMAGERTEKLTKFVVGLALFASVSGFCFGFDTGVISAALVSIKDDFGHILDDTEKEWISAATSCGALVGALSSGALADRVGRKWTLAVGDVWFTLGAIIICSSFSVVQMIVGRAVLGLGVGTAAAIAPLYIAEVAPTRFRGALVTVQSIAITGGQFFSYCIGIPLTGHNGWRIQFAIGIVPAVVQAAVVHFLPESPRYDLLRGQREAALATIHRSYKGMSEDYIAVKFAALEEVVGISADFNRGHTLGQKMRLVLTEGKYRKPAITALGIGIFQQLCGFNSLMYYAATIFSYAGFDNPTSVGLIVSGTNWFFTFVAMMILDRVGKRRILLSTYPGMIAGLALASVAFWKMTGSTGHRLVEGTEYPQQWSNMMLGMMVVFIAFYATGSGNITWTVGEMFPLEMRGIGASILAGGVWAANIVISATFLTLMNAIGPTPTFALYAGICLAGLIFIYFCYPEPSGLSLEEIQIIYNYGFGVQKSREIRAEHKLKAQEMRDRANSHIGGSATASDDQLNKV.

The Cytoplasmic segment spans residues 1–64; sequence MSDEKNYGIS…ERTEKLTKFV (64 aa). A helical membrane pass occupies residues 65 to 85; that stretch reads VGLALFASVSGFCFGFDTGVI. The Extracellular segment spans residues 86–106; the sequence is SAALVSIKDDFGHILDDTEKE. The chain crosses the membrane as a helical span at residues 107–127; sequence WISAATSCGALVGALSSGALA. Over 128–140 the chain is Cytoplasmic; it reads DRVGRKWTLAVGD. The helical transmembrane segment at 141 to 161 threads the bilayer; sequence VWFTLGAIIICSSFSVVQMIV. Over 162 to 163 the chain is Extracellular; it reads GR. A helical membrane pass occupies residues 164–184; sequence AVLGLGVGTAAAIAPLYIAEV. At 185–192 the chain is on the cytoplasmic side; the sequence is APTRFRGA. A helical membrane pass occupies residues 193-213; the sequence is LVTVQSIAITGGQFFSYCIGI. Topologically, residues 214-222 are extracellular; the sequence is PLTGHNGWR. The chain crosses the membrane as a helical span at residues 223–243; that stretch reads IQFAIGIVPAVVQAAVVHFLP. The Cytoplasmic segment spans residues 244–313; it reads ESPRYDLLRG…VLTEGKYRKP (70 aa). The helical transmembrane segment at 314–334 threads the bilayer; sequence AITALGIGIFQQLCGFNSLMY. Residues 335–349 lie on the Extracellular side of the membrane; it reads YAATIFSYAGFDNPT. Residues 350–370 traverse the membrane as a helical segment; that stretch reads SVGLIVSGTNWFFTFVAMMIL. The Cytoplasmic portion of the chain corresponds to 371–377; it reads DRVGKRR. Residues 378 to 398 traverse the membrane as a helical segment; the sequence is ILLSTYPGMIAGLALASVAFW. The Extracellular segment spans residues 399–421; it reads KMTGSTGHRLVEGTEYPQQWSNM. Residues 422 to 442 form a helical membrane-spanning segment; the sequence is MLGMMVVFIAFYATGSGNITW. Over 443-458 the chain is Cytoplasmic; sequence TVGEMFPLEMRGIGAS. The helical transmembrane segment at 459 to 479 threads the bilayer; it reads ILAGGVWAANIVISATFLTLM. Over 480–485 the chain is Extracellular; that stretch reads NAIGPT. The helical transmembrane segment at 486 to 506 threads the bilayer; sequence PTFALYAGICLAGLIFIYFCY. Residues 507-566 lie on the Cytoplasmic side of the membrane; it reads PEPSGLSLEEIQIIYNYGFGVQKSREIRAEHKLKAQEMRDRANSHIGGSATASDDQLNKV. A disordered region spans residues 546–566; sequence DRANSHIGGSATASDDQLNKV. The segment covering 556 to 566 has biased composition (polar residues); that stretch reads ATASDDQLNKV.

The protein belongs to the major facilitator superfamily. Sugar transporter (TC 2.A.1.1) family.

The protein localises to the cell membrane. It carries out the reaction myo-inositol(out) + H(+)(out) = myo-inositol(in) + H(+)(in). Major transporter for myo-inositol. Plays a role in the traversal of the host blood-brain barrier. The polypeptide is Myo-inositol transporter 1A (Cryptococcus neoformans var. grubii serotype A (strain H99 / ATCC 208821 / CBS 10515 / FGSC 9487) (Filobasidiella neoformans var. grubii)).